The primary structure comprises 402 residues: MAEISGLPDDLLVKILAFLPTKVAISTSVLSKQWRFLWMWLPKLKYDDYDDITDGFNSVSAFQTYRDFIAKNLPLHRAPIIESLSLGFRCGTLQPEDLKSWVEVAVSRSVRELSILAYYRNNYALSSSSLYTCKSLVTLKGFNIRVDVPPTVCLLPSLRTLELKRVRYLNEDSLRMLLSFCPVLEYLSIERHDNDNLRGLVVDVPSLRRLSLTSYTGCSSDDYVIVTPSLKYFKAFDYRSEISSYKIEKIPELEEADISIERNPEKLFVYFKSIKCLSLQVDFNSKEEPGYDSGIVFNHLEELTPYINDANWSKLLFRLLNDSPKLRVLEISNSKSFYKEKIGEYLPVSWSKNQGSVPKCFLNSLETFRVKWYYSEEQEDRDFLSLIFKHARCLKSTSILHR.

An F-box domain is found at 1 to 47; the sequence is MAEISGLPDDLLVKILAFLPTKVAISTSVLSKQWRFLWMWLPKLKYD. Residues 349–401 enclose the FBD domain; that stretch reads SWSKNQGSVPKCFLNSLETFRVKWYYSEEQEDRDFLSLIFKHARCLKSTSILH.

This is Putative FBD-associated F-box protein At5g56690 from Arabidopsis thaliana (Mouse-ear cress).